The following is a 166-amino-acid chain: 2-C-methyl-D-erythritol 2,4-cyclodiphosphate synthase (166 aa).

A divalent metal cation-binding residues include aspartate 17 and histidine 19. Residues 17–19 (DSH) and 43–44 (HS) contribute to the 4-CDP-2-C-methyl-D-erythritol 2-phosphate site. An a divalent metal cation-binding site is contributed by histidine 51. Residues 65 to 67 (DIG), 109 to 115 (AQKPKMA), and arginine 151 each bind 4-CDP-2-C-methyl-D-erythritol 2-phosphate.

It belongs to the IspF family. Homotrimer. It depends on a divalent metal cation as a cofactor.

It carries out the reaction 4-CDP-2-C-methyl-D-erythritol 2-phosphate = 2-C-methyl-D-erythritol 2,4-cyclic diphosphate + CMP. It functions in the pathway isoprenoid biosynthesis; isopentenyl diphosphate biosynthesis via DXP pathway; isopentenyl diphosphate from 1-deoxy-D-xylulose 5-phosphate: step 4/6. Involved in the biosynthesis of isopentenyl diphosphate (IPP) and dimethylallyl diphosphate (DMAPP), two major building blocks of isoprenoid compounds. Catalyzes the conversion of 4-diphosphocytidyl-2-C-methyl-D-erythritol 2-phosphate (CDP-ME2P) to 2-C-methyl-D-erythritol 2,4-cyclodiphosphate (ME-CPP) with a corresponding release of cytidine 5-monophosphate (CMP). The chain is 2-C-methyl-D-erythritol 2,4-cyclodiphosphate synthase from Rhodopirellula baltica (strain DSM 10527 / NCIMB 13988 / SH1).